The primary structure comprises 1552 residues: ABC multidrug transporter lscH (1552 aa).

A run of 2 helical transmembrane segments spans residues 32–52 (ETIL…IPII) and 68–88 (WFKK…VGLW). The N-linked (GlcNAc...) asparagine glycan is linked to asparagine 91. The next 8 helical transmembrane spans lie at 100 to 120 (STPS…LSTI), 158 to 178 (HSAI…MLLL), 280 to 300 (LFQI…IELA), 311 to 331 (NGYG…VSVG), 413 to 433 (AACV…VFLA), 457 to 477 (ALAS…FSVI), 500 to 520 (ILSI…FAGI), and 528 to 548 (LTIA…SPLA). In terms of domain architecture, ABC transmembrane type-1 1 spans 280–559 (LFQIGFTYAQ…IVQALPQISG (280 aa)). The segment at 573 to 655 (AEERHDPRST…PDANGDSRDA (83 aa)) is disordered. Residues 581–602 (STTTGTSPESNNGSQQTLSDKQ) show a composition bias toward polar residues. An N-linked (GlcNAc...) asparagine glycan is attached at asparagine 592. Positions 639–884 (GHLADTTPDA…AELGWADRDL (246 aa)) constitute an ABC transporter 1 domain. 676–683 (GPVGCGKS) contributes to the ATP binding site. 2 N-linked (GlcNAc...) asparagine glycosylation sites follow: asparagine 719 and asparagine 834. Basic and acidic residues predominate over residues 887–912 (QQEKPGKDELNHEHGEYSESAPEKLR). Residues 887 to 917 (QQEKPGKDELNHEHGEYSESAPEKLRRSQTN) form a disordered region. A run of 2 helical transmembrane segments spans residues 957–977 (GWLT…CDSF) and 1005–1025 (AVLG…LFII). An ABC transmembrane type-1 2 domain is found at 963–1241 (IFVIAICVYA…ATITSWVTLE (279 aa)). N-linked (GlcNAc...) asparagine glycosylation is present at asparagine 1028. A run of 4 helical transmembrane segments spans residues 1076 to 1096 (AALG…LVCV), 1100 to 1120 (YMAA…HFYL), 1184 to 1204 (WITF…IVLT), and 1210 to 1230 (AIGP…SATM). One can recognise an ABC transporter 2 domain in the interval 1295-1538 (IELDNVTASY…PTSIFKELYL (244 aa)). Asparagine 1299 and asparagine 1313 each carry an N-linked (GlcNAc...) asparagine glycan. Residue 1328-1335 (GRTGSGKS) participates in ATP binding.

It belongs to the ABC transporter superfamily. ABCC family. Conjugate transporter (TC 3.A.1.208) subfamily.

It localises to the cell membrane. ABC multidrug transporter; part of the gene cluster that mediates the biosynthesis of the lipopeptide antibiotics leucinostatins that show extensive biological activities, including antimalarial, antiviral, antibacterial, antifungal, and antitumor activities, as well as phytotoxic. May be involved in the efflux of leucinostatins. This Purpureocillium lilacinum (Paecilomyces lilacinus) protein is ABC multidrug transporter lscH.